We begin with the raw amino-acid sequence, 215 residues long: Protein C' (215 aa).

The tract at residues 12-34 (MPSFLKKILKLRGRRQEDESRSR) is disordered. Residues 15-22 (FLKKILKL) form an involved in self-degradation and in host STAT1 degradation region. A compositionally biased stretch (basic and acidic residues) spans 25–35 (RRQEDESRSRM). The segment covering 36 to 66 (LSDSSTQSYQVNQLTSEETEAGSTIPSTPSK) has biased composition (polar residues).

Belongs to the respirovirus protein C family. As to quaternary structure, the different isoforms interact (via C-terminus) with unphosphorylated and phosphorylated human STAT1 (via N-terminus), favoring the formation of parallel STAT1 homodimers. The different isoforms do not interact with host STAT2. C protein interacts with L protein; this interaction has an inhibitory effect on viral transcription and replication. Protein Y1 is produced not only by alternative initiation, but also by proteolytic cleavage of C'. Only alternative initiation is detected in vitro, whereas in vivo cleavage seems to be predominant.

It is found in the host cytoplasm. Its function is as follows. The different products prevent the establishment of cellular antiviral state by blocking the interferon-alpha/beta (IFN-alpha/beta) and IFN-gamma signaling pathways. They inhibit IFN-alpha/beta induced tyrosine phosphorylation of STAT1 and STAT2. Blocking the IFN-alpha/beta pathway requires binding to STAT1 in the cytoplasm. They inhibit IFN-gamma induced serine phosphorylation of STAT1. Block the IFN-gamma pathway by binding to and stabilizing the parallel form of the STAT1 dimer, further inducing high-molecular-weight complex formation and inhibition of transcription by IFN-gamma. May also have a role in preventing the cell to enter apoptosis. Modulate regulation of viral transcription and replication. Overexpression inhibits the viral RNA polymerase. The absence of all C', C and Y1 proteins leads to viral delayed growth. Plays an important role in virion particles release. Modulates virion shape. This Cavia cutleri (Guinea pig) protein is Protein C' (P/V/C).